We begin with the raw amino-acid sequence, 168 residues long: 6,7-dimethyl-8-ribityllumazine synthase (168 aa).

Residues phenylalanine 24, 58-60 (ALE), and 82-84 (AVI) contribute to the 5-amino-6-(D-ribitylamino)uracil site. 87–88 (ET) lines the (2S)-2-hydroxy-3-oxobutyl phosphate pocket. Histidine 90 acts as the Proton donor in catalysis. Asparagine 115 contacts 5-amino-6-(D-ribitylamino)uracil. Arginine 129 contributes to the (2S)-2-hydroxy-3-oxobutyl phosphate binding site.

Belongs to the DMRL synthase family.

It carries out the reaction (2S)-2-hydroxy-3-oxobutyl phosphate + 5-amino-6-(D-ribitylamino)uracil = 6,7-dimethyl-8-(1-D-ribityl)lumazine + phosphate + 2 H2O + H(+). It participates in cofactor biosynthesis; riboflavin biosynthesis; riboflavin from 2-hydroxy-3-oxobutyl phosphate and 5-amino-6-(D-ribitylamino)uracil: step 1/2. Its function is as follows. Catalyzes the formation of 6,7-dimethyl-8-ribityllumazine by condensation of 5-amino-6-(D-ribitylamino)uracil with 3,4-dihydroxy-2-butanone 4-phosphate. This is the penultimate step in the biosynthesis of riboflavin. This is 6,7-dimethyl-8-ribityllumazine synthase from Paraburkholderia phytofirmans (strain DSM 17436 / LMG 22146 / PsJN) (Burkholderia phytofirmans).